A 186-amino-acid chain; its full sequence is Protein GrpE (186 aa).

A compositionally biased stretch (polar residues) spans 1–15 (MADEQQTLDQQTPEQ). The tract at residues 1–20 (MADEQQTLDQQTPEQPTGAA) is disordered.

This sequence belongs to the GrpE family. In terms of assembly, homodimer.

The protein localises to the cytoplasm. In terms of biological role, participates actively in the response to hyperosmotic and heat shock by preventing the aggregation of stress-denatured proteins, in association with DnaK and GrpE. It is the nucleotide exchange factor for DnaK and may function as a thermosensor. Unfolded proteins bind initially to DnaJ; upon interaction with the DnaJ-bound protein, DnaK hydrolyzes its bound ATP, resulting in the formation of a stable complex. GrpE releases ADP from DnaK; ATP binding to DnaK triggers the release of the substrate protein, thus completing the reaction cycle. Several rounds of ATP-dependent interactions between DnaJ, DnaK and GrpE are required for fully efficient folding. The protein is Protein GrpE of Pseudomonas aeruginosa (strain LESB58).